Reading from the N-terminus, the 86-residue chain is Small ribosomal subunit protein uS17 (86 aa).

Belongs to the universal ribosomal protein uS17 family. Part of the 30S ribosomal subunit.

Its function is as follows. One of the primary rRNA binding proteins, it binds specifically to the 5'-end of 16S ribosomal RNA. This Exiguobacterium sp. (strain ATCC BAA-1283 / AT1b) protein is Small ribosomal subunit protein uS17.